Reading from the N-terminus, the 1031-residue chain is Ookinete maturation protein 1 (1031 aa).

Disordered stretches follow at residues 125–184 (HNEN…PELE), 340–405 (KEAE…DGMR), and 609–697 (DAEL…NDSI). Residues 141-168 (QKLKKKKKIKKGTKKKSINKISILKHKS) are compositionally biased toward basic residues. The segment covering 171-180 (SFPSTQNENT) has biased composition (polar residues). Residues 340–357 (KEAEEEERKKNEDEHILE) show a composition bias toward basic and acidic residues. The span at 377–394 (LGKSFKNNESFELNSPQK) shows a compositional bias: polar residues. Residues 581 to 646 (IDEENSVFVE…ETQMAGKEEK (66 aa)) are a coiled coil. A compositionally biased stretch (basic and acidic residues) spans 610 to 648 (AELRKDEEEDKSKNNEKDSKSEERDILETQMAGKEEKPV). Positions 649 to 659 (LKKKKKNKGKQ) are enriched in basic residues. Basic and acidic residues predominate over residues 660–686 (RNREGKGVVEKGYDAKREKKENEEKNK).

In the mosquito vector midgut, plays a role in ookinete development. This is Ookinete maturation protein 1 from Plasmodium berghei (strain Anka).